Reading from the N-terminus, the 291-residue chain is Insulin-like growth factor-binding protein 3 (291 aa).

Positions 1 to 27 (MLRARPALWAAALTALTLLRGPPAARA) are cleaved as a signal peptide. Positions 28–134 (GAGTMGAGPV…LRPYLLPSAS (107 aa)) are IGF-binding. In terms of domain architecture, IGFBP N-terminal spans 36–119 (PVVRCEPCDA…LDGRGLCANA (84 aa)). 6 cysteine pairs are disulfide-bonded: Cys40-Cys69, Cys43-Cys71, Cys51-Cys72, Cys60-Cys75, Cys83-Cys96, and Cys90-Cys116. Asn118 and Asn136 each carry an N-linked (GlcNAc...) asparagine glycan. Disordered stretches follow at residues 132–162 (SASG…RVPV) and 177–211 (KGHA…TEYG). Over residues 146–155 (MGSTENQAGP) the composition is skewed to polar residues. Ser148 carries the post-translational modification Phosphoserine. Over residues 177-190 (KGHAKDSQRYKVDY) the composition is skewed to basic and acidic residues. The span at 191–202 (ESQSTDTQNFSS) shows a compositional bias: polar residues. Asn199 is a glycosylation site (N-linked (GlcNAc...) asparagine). Ser201 carries the post-translational modification Phosphoserine. In terms of domain architecture, Thyroglobulin type-1 spans 210-285 (YGPCRREMED…DVKGKGDVHC (76 aa)). Cystine bridges form between Cys213/Cys240, Cys251/Cys262, and Cys264/Cys285.

In terms of assembly, interacts with XLKD1. Binds IGF2 more than IGF1. Forms a ternary complex of about 140 to 150 kDa with IGF1 or IGF2 and a 85 kDa glycoprotein (ALS). Interacts with humanin; humanin competes with importin KPNB1 for binding to IGFBP3, blocking IGFBP3 nuclear import and IGFBP3-mediated apoptosis. Interacts with TMEM219. Interacts with RXRA; this interaction modulates the transcriptional activity of RXRA. Interacts with LRP1; this interaction mediates cell growth inhibition independent of IGF1. In terms of processing, phosphorylated by FAM20C in the extracellular medium. Phosphorylated by CK2; resulting in decreased nuclear localization. Plasma; expressed by most tissues.

The protein resides in the secreted. The protein localises to the nucleus. In terms of biological role, multifunctional protein that plays a critical role in regulating the availability of IGFs such as IGF1 and IGF2 to their receptors and thereby regulates IGF-mediated cellular processes including proliferation, differentiation, and apoptosis in a cell-type specific manner. Also exhibits IGF-independent antiproliferative and apoptotic effects mediated by its receptor TMEM219/IGFBP-3R. Inhibits the positive effect of humanin on insulin sensitivity. Promotes testicular germ cell apoptosis. Acts via LRP-1/alpha2M receptor, also known as TGF-beta type V receptor, to mediate cell growth inhibition independent of IGF1. Mechanistically, induces serine-specific dephosphorylation of IRS1 or IRS2 upon ligation to its receptor, leading to the inhibitory cascade. In the nucleus, interacts with transcription factors such as retinoid X receptor-alpha/RXRA to regulate transcriptional signaling and apoptosis. The chain is Insulin-like growth factor-binding protein 3 (IGFBP3) from Bos taurus (Bovine).